We begin with the raw amino-acid sequence, 31 residues long: Glucagon-5 (31 aa).

The protein belongs to the glucagon family.

The protein localises to the secreted. Functionally, glucagon plays a key role in glucose metabolism and homeostasis. Regulates blood glucose by increasing gluconeogenesis and decreasing glycolysis. The sequence is that of Glucagon-5 from Huso dauricus (Kaluga sturgeon).